A 153-amino-acid chain; its full sequence is Arachidonate 5-lipoxygenase-activating protein (153 aa).

Over 1–8 (MDQEAVGN) the chain is Lumenal. A helical membrane pass occupies residues 9 to 30 (VVLLAIVTLISVVQNGFFAHKV). The Cytoplasmic segment spans residues 31–52 (EHESRNQNGRSFQRTGTLAFER). A helical membrane pass occupies residues 53-77 (VYTANQNCVDAYPTFLAVLWTAGLL). Residues 78 to 80 (CSQ) are Lumenal-facing. The chain crosses the membrane as a helical span at residues 81–102 (VPAAFAGLMYLFVRQKYFVGYL). Over 103-107 (GERTQ) the chain is Cytoplasmic. Residues 108–115 (STPGYIFG) lie within the membrane without spanning it. A helical transmembrane segment spans residues 116–128 (KRIILFLFLMSLA). The Lumenal segment spans residues 129–153 (GILNYCLILLFGSDFENYIKTISTT).

This sequence belongs to the MAPEG family. As to quaternary structure, homotrimer. Interacts with LTC4S and ALOX5.

It localises to the nucleus membrane. It is found in the endoplasmic reticulum membrane. Functionally, required for leukotriene biosynthesis by ALOX5 (5-lipoxygenase). Anchors ALOX5 to the membrane. Binds arachidonic acid, and could play an essential role in the transfer of arachidonic acid to ALOX5. Binds to MK-886, a compound that blocks the biosynthesis of leukotrienes. The chain is Arachidonate 5-lipoxygenase-activating protein (ALOX5AP) from Oryctolagus cuniculus (Rabbit).